Consider the following 428-residue polypeptide: D-amino acid dehydrogenase (428 aa).

3–17 (VVILGSGVVGVASAY) contributes to the FAD binding site.

The protein belongs to the DadA oxidoreductase family. Requires FAD as cofactor.

It carries out the reaction a D-alpha-amino acid + A + H2O = a 2-oxocarboxylate + AH2 + NH4(+). It participates in amino-acid degradation; D-alanine degradation; NH(3) and pyruvate from D-alanine: step 1/1. In terms of biological role, oxidative deamination of D-amino acids. This Burkholderia cenocepacia (strain ATCC BAA-245 / DSM 16553 / LMG 16656 / NCTC 13227 / J2315 / CF5610) (Burkholderia cepacia (strain J2315)) protein is D-amino acid dehydrogenase.